The primary structure comprises 473 residues: Chaperone SurA (473 aa).

Positions 1–36 are cleaved as a signal peptide; sequence MTNDRLFAGIARVLSVRPLAAALALLLTLPLIGVQA. PpiC domains follow at residues 214–315 and 326–425; these read SLAL…KVIE and ITQT…QVLE.

Its subcellular location is the periplasm. It catalyses the reaction [protein]-peptidylproline (omega=180) = [protein]-peptidylproline (omega=0). Functionally, chaperone involved in the correct folding and assembly of outer membrane proteins. Recognizes specific patterns of aromatic residues and the orientation of their side chains, which are found more frequently in integral outer membrane proteins. May act in both early periplasmic and late outer membrane-associated steps of protein maturation. In Polaromonas sp. (strain JS666 / ATCC BAA-500), this protein is Chaperone SurA.